Here is an 829-residue protein sequence, read N- to C-terminus: E3 ubiquitin-protein ligase Jade-2 (829 aa).

The tract at residues 1-52 is disordered; that stretch reads MEEKRRKYSISSDNSDTTDGHVTSTSASRCSKLPSSTKSGWPRQNEKKPSEV. Residues S9 and S15 each carry the phosphoserine modification. The span at 9–39 shows a compositional bias: polar residues; sequence SISSDNSDTTDGHVTSTSASRCSKLPSSTKS. Residues K32 and K38 each carry the N6-acetyllysine modification. At S117 the chain carries Phosphoserine. The PHD-type 1 zinc finger occupies 199 to 249; sequence DVVCDVCRSPEGEDGNEMVFCDKCNVCVHQACYGILKVPTGSWLCRTCALG. A C2HC pre-PHD-type zinc finger spans residues 251–285; it reads QPKCLLCPKRGGALKPTRSGTKWVHVSCALWIPEV. Residue K298 is modified to N6-acetyllysine. A PHD-type 2 zinc finger spans residues 309 to 365; that stretch reads LSCSLCKECTGTCIQCSMPSCITAFHVTCAFDRGLEMRTILADNDEVKFKSLCQEHS. Disordered stretches follow at residues 362–383, 517–555, and 622–817; these read QEHS…PSQA, REPS…AGPE, and SFMR…REAG. Basic residues predominate over residues 522–535; it reads RRSKGKKNDSKRKG. Over residues 536 to 552 the composition is skewed to basic and acidic residues; the sequence is REGPKGSSPEKKEKVKA. The span at 637 to 650 shows a compositional bias: basic residues; sequence KARGRTRLPAKKKP. Basic and acidic residues predominate over residues 776–786; the sequence is ERPKVSLHFDT. Acidic residues predominate over residues 792 to 806; it reads FSDEEMSDSEVEAED.

The protein belongs to the JADE family. Component of the HBO1 complex composed at least of ING4 or ING5, MYST2/HBO1, MEAF6, and one of JADE1, JADE2 and JADE3. Interacts (via C-terminus) with KDM1A (via AOD/Tower domain).

The catalysed reaction is S-ubiquitinyl-[E2 ubiquitin-conjugating enzyme]-L-cysteine + [acceptor protein]-L-lysine = [E2 ubiquitin-conjugating enzyme]-L-cysteine + N(6)-ubiquitinyl-[acceptor protein]-L-lysine.. It participates in protein modification; protein ubiquitination. Functionally, scaffold subunit of some HBO1 complexes, which have a histone H4 acetyltransferase activity. Acts as a E3 ubiquitin-protein ligase mediating the ubiquitination and subsequent proteasomal degradation of target protein histone demethylase KDM1A. Also acts as a ubiquitin ligase E3 toward itself. Positive regulator of neurogenesis. The sequence is that of E3 ubiquitin-protein ligase Jade-2 (Jade2) from Mus musculus (Mouse).